The primary structure comprises 55 residues: ATP synthase F(0) complex subunit 8 (55 aa).

The chain crosses the membrane as a helical span at residues 10–32; it reads FFIMLASWLTFSLIIQPKLLTFV.

It belongs to the ATPase protein 8 family. In terms of assembly, component of the ATP synthase complex composed at least of ATP5F1A/subunit alpha, ATP5F1B/subunit beta, ATP5MC1/subunit c (homooctomer), MT-ATP6/subunit a, MT-ATP8/subunit 8, ATP5ME/subunit e, ATP5MF/subunit f, ATP5MG/subunit g, ATP5MK/subunit k, ATP5MJ/subunit j, ATP5F1C/subunit gamma, ATP5F1D/subunit delta, ATP5F1E/subunit epsilon, ATP5PF/subunit F6, ATP5PB/subunit b, ATP5PD/subunit d, ATP5PO/subunit OSCP. ATP synthase complex consists of a soluble F(1) head domain (subunits alpha(3) and beta(3)) - the catalytic core - and a membrane F(0) domain - the membrane proton channel (subunits c, a, 8, e, f, g, k and j). These two domains are linked by a central stalk (subunits gamma, delta, and epsilon) rotating inside the F1 region and a stationary peripheral stalk (subunits F6, b, d, and OSCP).

It is found in the mitochondrion membrane. Functionally, subunit 8, of the mitochondrial membrane ATP synthase complex (F(1)F(0) ATP synthase or Complex V) that produces ATP from ADP in the presence of a proton gradient across the membrane which is generated by electron transport complexes of the respiratory chain. ATP synthase complex consist of a soluble F(1) head domain - the catalytic core - and a membrane F(1) domain - the membrane proton channel. These two domains are linked by a central stalk rotating inside the F(1) region and a stationary peripheral stalk. During catalysis, ATP synthesis in the catalytic domain of F(1) is coupled via a rotary mechanism of the central stalk subunits to proton translocation. In vivo, can only synthesize ATP although its ATP hydrolase activity can be activated artificially in vitro. Part of the complex F(0) domain. The protein is ATP synthase F(0) complex subunit 8 of Loxigilla noctis (Lesser Antillean bullfinch).